A 195-amino-acid polypeptide reads, in one-letter code: Probable nicotinate-nucleotide adenylyltransferase (195 aa).

Belongs to the NadD family.

The catalysed reaction is nicotinate beta-D-ribonucleotide + ATP + H(+) = deamido-NAD(+) + diphosphate. It participates in cofactor biosynthesis; NAD(+) biosynthesis; deamido-NAD(+) from nicotinate D-ribonucleotide: step 1/1. In terms of biological role, catalyzes the reversible adenylation of nicotinate mononucleotide (NaMN) to nicotinic acid adenine dinucleotide (NaAD). The protein is Probable nicotinate-nucleotide adenylyltransferase of Opitutus terrae (strain DSM 11246 / JCM 15787 / PB90-1).